Consider the following 251-residue polypeptide: Imidazole glycerol phosphate synthase subunit HisF (251 aa).

Residues D11 and D130 contribute to the active site.

This sequence belongs to the HisA/HisF family. Heterodimer of HisH and HisF.

The protein resides in the cytoplasm. The enzyme catalyses 5-[(5-phospho-1-deoxy-D-ribulos-1-ylimino)methylamino]-1-(5-phospho-beta-D-ribosyl)imidazole-4-carboxamide + L-glutamine = D-erythro-1-(imidazol-4-yl)glycerol 3-phosphate + 5-amino-1-(5-phospho-beta-D-ribosyl)imidazole-4-carboxamide + L-glutamate + H(+). It participates in amino-acid biosynthesis; L-histidine biosynthesis; L-histidine from 5-phospho-alpha-D-ribose 1-diphosphate: step 5/9. In terms of biological role, IGPS catalyzes the conversion of PRFAR and glutamine to IGP, AICAR and glutamate. The HisF subunit catalyzes the cyclization activity that produces IGP and AICAR from PRFAR using the ammonia provided by the HisH subunit. The sequence is that of Imidazole glycerol phosphate synthase subunit HisF from Cytophaga hutchinsonii (strain ATCC 33406 / DSM 1761 / CIP 103989 / NBRC 15051 / NCIMB 9469 / D465).